The chain runs to 260 residues: Phosphate import ATP-binding protein PstB (260 aa).

The 242-residue stretch at 14 to 255 folds into the ABC transporter domain; the sequence is VQVKNLAFYY…PRNKQTEDYI (242 aa). 46–53 contributes to the ATP binding site; the sequence is GPSGCGKS.

Belongs to the ABC transporter superfamily. Phosphate importer (TC 3.A.1.7) family. The complex is composed of two ATP-binding proteins (PstB), two transmembrane proteins (PstC and PstA) and a solute-binding protein (PstS).

The protein localises to the cell inner membrane. It catalyses the reaction phosphate(out) + ATP + H2O = ADP + 2 phosphate(in) + H(+). In terms of biological role, part of the ABC transporter complex PstSACB involved in phosphate import. Responsible for energy coupling to the transport system. The polypeptide is Phosphate import ATP-binding protein PstB (Syntrophotalea carbinolica (strain DSM 2380 / NBRC 103641 / GraBd1) (Pelobacter carbinolicus)).